The chain runs to 478 residues: Lipoprotein lipase (478 aa).

Residues 1-27 (MESKALLLVALSVWLQSLIVSREGLAT) form the signal peptide. The interaction with GPIHBP1 stretch occupies residues 35 to 56 (RDFTDIESKFALRTPEDTVEDT). An intrachain disulfide couples C57 to C70. An N-linked (GlcNAc...) asparagine glycan is attached at N73. Y124 is subject to 3'-nitrotyrosine. S162 functions as the Nucleophile in the catalytic mechanism. D186 (charge relay system) is an active-site residue. Residue Y194 is modified to 3'-nitrotyrosine. Positions 197, 200, 202, and 205 each coordinate Ca(2+). An intrachain disulfide couples C246 to C269. The tract at residues 246–269 (CNIGEAIRVIAERGLGDVDQLVKC) is essential for determining substrate specificity. Residue H271 is the Charge relay system of the active site. Intrachain disulfides connect C294–C313 and C305–C308. Positions 344 to 467 (FHYQVKMRFS…KGKSSVVFVK (124 aa)) constitute a PLAT domain. 3'-nitrotyrosine is present on Y346. N389 is a glycosylation site (N-linked (GlcNAc...) asparagine). Residues 420-424 (WSNWW) are important for interaction with lipoprotein particles. Positions 433–437 (KIRVK) are important for heparin binding. The interaction with GPIHBP1 stretch occupies residues 446–470 (IFCSREKKSHLQKGKSSVVFVKCHD). C448 and C468 form a disulfide bridge.

It belongs to the AB hydrolase superfamily. Lipase family. As to quaternary structure, homodimer. Interacts with GPIHBP1 with 1:1 stoichiometry. Interacts with APOC2; the interaction activates LPL activity in the presence of lipids. Interaction with heparan sulfate proteoglycans is required to protect LPL against loss of activity. Associates with lipoprotein particles in blood plasma. Interacts with LMF1 and SEL1L; interaction with SEL1L is required to prevent aggregation of newly synthesized LPL in the endoplasmic reticulum (ER), and for normal export of LPL from the ER to the extracellular space. Interacts with SORL1; SORL1 acts as a sorting receptor, promoting LPL localization to endosomes and later to lysosomes, leading to degradation of newly synthesized LPL. In terms of processing, tyrosine nitration after lipopolysaccharide (LPS) challenge down-regulates the lipase activity.

Its subcellular location is the cell membrane. The protein localises to the secreted. It localises to the extracellular space. It is found in the extracellular matrix. The catalysed reaction is a triacylglycerol + H2O = a diacylglycerol + a fatty acid + H(+). The enzyme catalyses a 1,2-diacyl-sn-glycero-3-phosphocholine + H2O = a 2-acyl-sn-glycero-3-phosphocholine + a fatty acid + H(+). It catalyses the reaction 1,2,3-tri-(9Z-octadecenoyl)-glycerol + H2O = di-(9Z)-octadecenoylglycerol + (9Z)-octadecenoate + H(+). It carries out the reaction 1,2-di-(9Z-octadecenoyl)-sn-glycero-3-phosphocholine + H2O = (9Z-octadecenoyl)-sn-glycero-3-phosphocholine + (9Z)-octadecenoate + H(+). The catalysed reaction is 1,2,3-tributanoylglycerol + H2O = dibutanoylglycerol + butanoate + H(+). The enzyme catalyses 1,2-dihexadecanoyl-sn-glycero-3-phosphocholine + H2O = hexadecanoyl-sn-glycero-3-phosphocholine + hexadecanoate + H(+). Its activity is regulated as follows. The apolipoprotein APOC2 acts as a coactivator of LPL activity. Ca(2+) binding promotes protein stability and formation of the active homodimer. Interaction with GPIHBP1 protects LPL against inactivation by ANGPTL4. Key enzyme in triglyceride metabolism. Catalyzes the hydrolysis of triglycerides from circulating chylomicrons and very low density lipoproteins (VLDL), and thereby plays an important role in lipid clearance from the blood stream, lipid utilization and storage. Although it has both phospholipase and triglyceride lipase activities it is primarily a triglyceride lipase with low but detectable phospholipase activity. Mediates margination of triglyceride-rich lipoprotein particles in capillaries. Recruited to its site of action on the luminal surface of vascular endothelium by binding to GPIHBP1 and cell surface heparan sulfate proteoglycans. The sequence is that of Lipoprotein lipase (LPL) from Sus scrofa (Pig).